The chain runs to 552 residues: Putative transport protein NT01EI_3867 (552 aa).

The next 5 membrane-spanning stretches (helical) occupy residues 4–24 (IALT…IGNW), 26–46 (IYGV…VGHF), 65–85 (FGLI…FFSS), 90–112 (GLRL…AAIH), and 158–178 (MGYA…IWLI). RCK C-terminal domains follow at residues 191–276 (RDFD…VIGE) and 279–361 (DTSL…IVGN). Transmembrane regions (helical) follow at residues 371–391 (MLPV…PLFI), 403–425 (AGGP…LYWF), 439–459 (IVLF…DTLL), 464–484 (VTWI…AALL), 493–513 (YLTL…LAFA), and 530–550 (VYPL…LLFW).

Belongs to the AAE transporter (TC 2.A.81) family. YidE subfamily.

It localises to the cell membrane. The chain is Putative transport protein NT01EI_3867 from Edwardsiella ictaluri (strain 93-146).